A 196-amino-acid chain; its full sequence is Recombination protein RecR (196 aa).

The segment at 57 to 72 adopts a C4-type zinc-finger fold; the sequence is CERCHTFTEGAVCETC. The Toprim domain occupies 80–175; sequence TRLCVVETPA…HVTRLARGVP (96 aa).

Belongs to the RecR family.

Functionally, may play a role in DNA repair. It seems to be involved in an RecBC-independent recombinational process of DNA repair. It may act with RecF and RecO. This Acidovorax sp. (strain JS42) protein is Recombination protein RecR.